The chain runs to 269 residues: MHALPRYAVFGNPAAHSKSPQIHQQFALQEGVDIEYGRICADIGGFAQAVSTFFETGGCGANVTVPFKQEAFHLADEHSDRALAAGAVNTLVWLEDGRIRGDNTDGIGLANDITQVKNIAIEGKTILLLGAGGAVRGVIPVLKEHRPARIVIANRTRAKAEELARLFGIEAVPMADVNGGFDIIINGTSGGLSGQLPAVSPKIFRDCRLAYDMVYGEAAKPFLDFARQSGAKKTADGLGMLVGQAAASYALWRGFKPDIRPVIEHMKAL.

Residues 17-19 and Thr-64 contribute to the shikimate site; that span reads SKS. Lys-68 functions as the Proton acceptor in the catalytic mechanism. An NADP(+)-binding site is contributed by Asp-80. Positions 89 and 105 each coordinate shikimate. NADP(+)-binding positions include 130-134, 154-159, and Met-213; these read GAGGA and NRTRAK. A shikimate-binding site is contributed by Tyr-215. Position 237 (Gly-237) interacts with NADP(+).

It belongs to the shikimate dehydrogenase family. As to quaternary structure, homodimer.

It carries out the reaction shikimate + NADP(+) = 3-dehydroshikimate + NADPH + H(+). Its pathway is metabolic intermediate biosynthesis; chorismate biosynthesis; chorismate from D-erythrose 4-phosphate and phosphoenolpyruvate: step 4/7. Involved in the biosynthesis of the chorismate, which leads to the biosynthesis of aromatic amino acids. Catalyzes the reversible NADPH linked reduction of 3-dehydroshikimate (DHSA) to yield shikimate (SA). This Neisseria gonorrhoeae (strain ATCC 700825 / FA 1090) protein is Shikimate dehydrogenase (NADP(+)).